Consider the following 362-residue polypeptide: Metacaspase-3 (362 aa).

Active-site residues include H174 and C230.

This sequence belongs to the peptidase C14B family.

This chain is Metacaspase-3 (AMC3), found in Arabidopsis thaliana (Mouse-ear cress).